A 132-amino-acid chain; its full sequence is Small ribosomal subunit protein uS8 (132 aa).

This sequence belongs to the universal ribosomal protein uS8 family. In terms of assembly, part of the 30S ribosomal subunit. Contacts proteins S5 and S12.

One of the primary rRNA binding proteins, it binds directly to 16S rRNA central domain where it helps coordinate assembly of the platform of the 30S subunit. The polypeptide is Small ribosomal subunit protein uS8 (Rickettsia typhi (strain ATCC VR-144 / Wilmington)).